Reading from the N-terminus, the 318-residue chain is Isoaspartyl peptidase/L-asparaginase (318 aa).

The active-site Nucleophile is the Thr180. Substrate is bound by residues 208 to 211 (RVSD) and 229 to 232 (TGIG).

It belongs to the Ntn-hydrolase family. As to quaternary structure, heterotetramer of two alpha and two beta chains arranged as a dimer of alpha/beta heterodimers. Cleaved into an alpha and beta chain by autocatalysis; this activates the enzyme. The N-terminal residue of the beta subunit is responsible for the nucleophile hydrolase activity.

The catalysed reaction is Cleavage of a beta-linked Asp residue from the N-terminus of a polypeptide.. Its function is as follows. Degrades proteins damaged by L-isoaspartyl residue formation (also known as beta-Asp residues). Probably performs the final step in the degradation of the reserve polymer cyanophycin (depolymerizes the building block L-beta-Asp-Arg). Also has L-asparaginase activity. This chain is Isoaspartyl peptidase/L-asparaginase, found in Nostoc sp. (strain PCC 7120 / SAG 25.82 / UTEX 2576).